The following is a 136-amino-acid chain: Small ribosomal subunit protein uS12 (136 aa).

D89 bears the 3-methylthioaspartic acid mark. A disordered region spans residues 104–136 (TAGVNGRTQRRSKYGAKRPKPGQAAAAAKGKKK). The span at 111–123 (TQRRSKYGAKRPK) shows a compositional bias: basic residues. The span at 124 to 136 (PGQAAAAAKGKKK) shows a compositional bias: low complexity.

Belongs to the universal ribosomal protein uS12 family. In terms of assembly, part of the 30S ribosomal subunit. Contacts proteins S8 and S17. May interact with IF1 in the 30S initiation complex.

Its function is as follows. With S4 and S5 plays an important role in translational accuracy. Functionally, interacts with and stabilizes bases of the 16S rRNA that are involved in tRNA selection in the A site and with the mRNA backbone. Located at the interface of the 30S and 50S subunits, it traverses the body of the 30S subunit contacting proteins on the other side and probably holding the rRNA structure together. The combined cluster of proteins S8, S12 and S17 appears to hold together the shoulder and platform of the 30S subunit. The chain is Small ribosomal subunit protein uS12 from Parabacteroides distasonis (strain ATCC 8503 / DSM 20701 / CIP 104284 / JCM 5825 / NCTC 11152).